Reading from the N-terminus, the 255-residue chain is Flagellar brake protein YcgR (255 aa).

The region spanning 130 to 245 is the PilZ domain; it reads QRREHFRVPL…MAAHLQRFVM (116 aa).

This sequence belongs to the YcgR family. As to quaternary structure, monomer. Interacts with the flagellar basal bodies.

It localises to the bacterial flagellum basal body. In terms of biological role, acts as a flagellar brake, regulating swimming and swarming in a bis-(3'-5') cyclic diguanylic acid (c-di-GMP)-dependent manner. Binds 1 c-di-GMP dimer per subunit. Increasing levels of c-di-GMP lead to decreased motility. This is Flagellar brake protein YcgR from Thiobacillus denitrificans (strain ATCC 25259 / T1).